We begin with the raw amino-acid sequence, 106 residues long: Nucleoid-associated protein DIP0260 (106 aa).

The protein belongs to the YbaB/EbfC family. In terms of assembly, homodimer.

It is found in the cytoplasm. The protein localises to the nucleoid. Its function is as follows. Binds to DNA and alters its conformation. May be involved in regulation of gene expression, nucleoid organization and DNA protection. The protein is Nucleoid-associated protein DIP0260 of Corynebacterium diphtheriae (strain ATCC 700971 / NCTC 13129 / Biotype gravis).